Consider the following 352-residue polypeptide: Probable protein kinase DDB_G0291842 (352 aa).

Residues 1-57 are disordered; the sequence is MRPLPDQSAFEDKSELVSKKQKNEDENNENRSPETPRTPKVCPKTPTKTPLRTPTKN. A compositionally biased stretch (basic and acidic residues) spans 10–34; it reads FEDKSELVSKKQKNEDENNENRSPE. Positions 38–56 are enriched in low complexity; it reads TPKVCPKTPTKTPLRTPTK. A Protein kinase domain is found at 77-331; the sequence is FEYINQIGEG…IQSLLKYDKL (255 aa). Residues 83–91 and Lys106 contribute to the ATP site; that span reads IGEGSFAKV. Catalysis depends on Asp207, which acts as the Proton acceptor. Mg(2+) is bound by residues Asn212 and Asp225.

It belongs to the protein kinase superfamily. Ser/Thr protein kinase family. WEE1 subfamily.

The catalysed reaction is L-seryl-[protein] + ATP = O-phospho-L-seryl-[protein] + ADP + H(+). It carries out the reaction L-threonyl-[protein] + ATP = O-phospho-L-threonyl-[protein] + ADP + H(+). This is Probable protein kinase DDB_G0291842 from Dictyostelium discoideum (Social amoeba).